A 1038-amino-acid polypeptide reads, in one-letter code: Translation initiation factor IF-2 (1038 aa).

The interval 48–426 (DALQGPGGNA…RQRRQEYEAM (379 aa)) is disordered. Positions 58 to 87 (GKSAAKPGAPRKAAPAKPAAPSPAAAARPA) are enriched in low complexity. A compositionally biased stretch (pro residues) spans 88–99 (APKPGAPAPKPA). Residues 100 to 114 (EAPSSTPAAPSAPSA) are compositionally biased toward low complexity. Over residues 115–125 (GPRPGPKPAPK) the composition is skewed to pro residues. The span at 126–141 (AAPVTPVPAAEFSAPA) shows a compositional bias: low complexity. The segment covering 142 to 153 (PAQPAAPQPQAP) has biased composition (pro residues). The segment covering 177–199 (DGGRDGGQRDGGRGGERGGDRPA) has biased composition (basic and acidic residues). Residues 200 to 219 (RPAGQGAPRPGGARPAGPRP) are compositionally biased toward low complexity. A compositionally biased stretch (gly residues) spans 261 to 277 (SGPGGAPRPQGGQGQGG). The segment covering 299–315 (GNRPNPGMMPQRPAAGP) has biased composition (low complexity). Over residues 319–406 (PGGGGRGPGG…GTQGAFGRPG (88 aa)) the composition is skewed to gly residues. The span at 410-419 (RRGRKSKRQR) shows a compositional bias: basic residues. The region spanning 531–703 (SRPPVVTVMG…VVLTADASLD (173 aa)) is the tr-type G domain. A G1 region spans residues 540–547 (GHVDHGKT). Position 540–547 (540–547 (GHVDHGKT)) interacts with GTP. Positions 565 to 569 (GITQH) are G2. The interval 590–593 (DTPG) is G3. Residues 590-594 (DTPGH) and 644-647 (NKID) contribute to the GTP site. Residues 644 to 647 (NKID) are G4. Residues 680 to 682 (SAK) form a G5 region.

The protein belongs to the TRAFAC class translation factor GTPase superfamily. Classic translation factor GTPase family. IF-2 subfamily.

The protein localises to the cytoplasm. Its function is as follows. One of the essential components for the initiation of protein synthesis. Protects formylmethionyl-tRNA from spontaneous hydrolysis and promotes its binding to the 30S ribosomal subunits. Also involved in the hydrolysis of GTP during the formation of the 70S ribosomal complex. This chain is Translation initiation factor IF-2, found in Streptomyces griseus subsp. griseus (strain JCM 4626 / CBS 651.72 / NBRC 13350 / KCC S-0626 / ISP 5235).